The following is a 182-amino-acid chain: Core-binding factor subunit beta (182 aa).

Phosphoserine is present on Ala-173.

It belongs to the CBF-beta family. Heterodimer with RUNX1, RUNX2 and RUNX3. Interacts with COPRS. Found in a complex with PRMT5 and RUNX1. As to quaternary structure, (Microbial infection) Interacts with HIV-1 Vif; forming an active cullin-5-RING E3 ubiquitin-protein ligase complex (ECS complex).

It is found in the nucleus. Its function is as follows. Forms the heterodimeric complex core-binding factor (CBF) with RUNX family proteins (RUNX1, RUNX2, and RUNX3). RUNX members modulate the transcription of their target genes through recognizing the core consensus binding sequence 5'-TGTGGT-3', or very rarely, 5'-TGCGGT-3', within their regulatory regions via their runt domain, while CBFB is a non-DNA-binding regulatory subunit that allosterically enhances the sequence-specific DNA-binding capacity of RUNX. The heterodimers bind to the core site of a number of enhancers and promoters, including murine leukemia virus, polyomavirus enhancer, T-cell receptor enhancers, LCK, IL3 and GM-CSF promoters. CBF complexes repress ZBTB7B transcription factor during cytotoxic (CD8+) T cell development. They bind to RUNX-binding sequence within the ZBTB7B locus acting as transcriptional silencer and allowing for cytotoxic T cell differentiation. In terms of biological role, (Microbial infection) Following infection, hijacked by the HIV-1 Vif protein, leading to the formation a cullin-5-RING E3 ubiquitin-protein ligase complex (ECS complex) that catalyzes ubiquitination and degradation of APOBEC3F and APOBEC3G. The complex can also ubiquitinate APOBEC3H to some extent. Association with HIV-1 Vif protein also inhibits the transcription coactivator activity of CBFB/CBF-beta. The chain is Core-binding factor subunit beta (CBFB) from Homo sapiens (Human).